Here is a 721-residue protein sequence, read N- to C-terminus: Ribonuclease R (721 aa).

The 339-residue stretch at 249–587 (RRSIIDREII…VHRLLWMFIF (339 aa)) folds into the RNB domain. The S1 motif domain occupies 639–719 (GKEFIGVVTT…LTRKIDFELV (81 aa)).

The protein belongs to the RNR ribonuclease family. RNase R subfamily.

The protein resides in the cytoplasm. It catalyses the reaction Exonucleolytic cleavage in the 3'- to 5'-direction to yield nucleoside 5'-phosphates.. Its function is as follows. 3'-5' exoribonuclease that releases 5'-nucleoside monophosphates and is involved in maturation of structured RNAs. The sequence is that of Ribonuclease R from Ureaplasma parvum serovar 3 (strain ATCC 700970).